We begin with the raw amino-acid sequence, 486 residues long: UDP-N-acetylmuramoyl-L-alanyl-D-glutamate--2,6-diaminopimelate ligase (486 aa).

Position 30 (Ser-30) interacts with UDP-N-acetyl-alpha-D-muramoyl-L-alanyl-D-glutamate. Residue 111–117 (GTNGKTT) coordinates ATP. Residues 153–154 (TT), Ser-180, Gln-186, and Arg-188 contribute to the UDP-N-acetyl-alpha-D-muramoyl-L-alanyl-D-glutamate site. Residue Lys-220 is modified to N6-carboxylysine. Meso-2,6-diaminopimelate contacts are provided by residues Arg-378, 402–405 (DNPR), Gly-455, and Glu-459. Positions 402–405 (DNPR) match the Meso-diaminopimelate recognition motif motif.

This sequence belongs to the MurCDEF family. MurE subfamily. Requires Mg(2+) as cofactor. In terms of processing, carboxylation is probably crucial for Mg(2+) binding and, consequently, for the gamma-phosphate positioning of ATP.

It is found in the cytoplasm. The enzyme catalyses UDP-N-acetyl-alpha-D-muramoyl-L-alanyl-D-glutamate + meso-2,6-diaminopimelate + ATP = UDP-N-acetyl-alpha-D-muramoyl-L-alanyl-gamma-D-glutamyl-meso-2,6-diaminopimelate + ADP + phosphate + H(+). Its pathway is cell wall biogenesis; peptidoglycan biosynthesis. In terms of biological role, catalyzes the addition of meso-diaminopimelic acid to the nucleotide precursor UDP-N-acetylmuramoyl-L-alanyl-D-glutamate (UMAG) in the biosynthesis of bacterial cell-wall peptidoglycan. The chain is UDP-N-acetylmuramoyl-L-alanyl-D-glutamate--2,6-diaminopimelate ligase from Parabacteroides distasonis (strain ATCC 8503 / DSM 20701 / CIP 104284 / JCM 5825 / NCTC 11152).